The sequence spans 103 residues: Small ribosomal subunit protein uS10 (103 aa).

It belongs to the universal ribosomal protein uS10 family. In terms of assembly, part of the 30S ribosomal subunit.

Involved in the binding of tRNA to the ribosomes. This is Small ribosomal subunit protein uS10 from Campylobacter jejuni subsp. jejuni serotype O:6 (strain 81116 / NCTC 11828).